The primary structure comprises 384 residues: Centrosomal protein of 44 kDa (384 aa).

The interval 11-188 (RKLEQRLRTL…TKCYSSALVE (178 aa)) is binds with microtubules and centrioles. Residues 191–222 (EEEEPTSDSEGGSHLEHEMESPFETAETTPNS) are disordered. Over residues 201–210 (GGSHLEHEME) the composition is skewed to basic and acidic residues. 2 coiled-coil regions span residues 221–260 (NSEQIELLRKQLAECQEKLQRLDCVEQRLQSLETSMKGKI) and 353–378 (TEDSNETTKQRMERITKMMEETSKLL).

Binds to centriolar microtubules.

The protein resides in the cytoplasm. It is found in the cytoskeleton. It localises to the microtubule organizing center. Its subcellular location is the centrosome. The protein localises to the centriole. The protein resides in the spindle pole. It is found in the midbody. Centriole-enriched microtubule-binding protein involved in centriole biogenesis. In collaboration with CEP295 and POC1B, is required for the centriole-to-centrosome conversion by ensuring the formation of bona fide centriole wall. Functions as a linker component that maintains centrosome cohesion. Associates with CROCC and regulates its stability and localization to the centrosome. The polypeptide is Centrosomal protein of 44 kDa (cep44) (Xenopus laevis (African clawed frog)).